Consider the following 208-residue polypeptide: FMN-dependent NADH:quinone oxidoreductase (208 aa).

FMN contacts are provided by residues 17 to 19 (SNS), 99 to 102 (MWNL), and 143 to 146 (SRGG).

The protein belongs to the azoreductase type 1 family. Homodimer. Requires FMN as cofactor.

The enzyme catalyses 2 a quinone + NADH + H(+) = 2 a 1,4-benzosemiquinone + NAD(+). The catalysed reaction is N,N-dimethyl-1,4-phenylenediamine + anthranilate + 2 NAD(+) = 2-(4-dimethylaminophenyl)diazenylbenzoate + 2 NADH + 2 H(+). Quinone reductase that provides resistance to thiol-specific stress caused by electrophilic quinones. Functionally, also exhibits azoreductase activity. Catalyzes the reductive cleavage of the azo bond in aromatic azo compounds to the corresponding amines. The protein is FMN-dependent NADH:quinone oxidoreductase of Staphylococcus carnosus (strain TM300).